The chain runs to 506 residues: NADH-quinone oxidoreductase subunit N 2 (506 aa).

14 helical membrane-spanning segments follow: residues 11–31 (SLAYFAPELVLIAAALLLVVW), 44–64 (LVILSLAALACSGGLGAYFLA), 82–102 (FSNLFRVIFALVTGAIVLFLV), 117–137 (SGELFTLILVLSLGMNLMAAS), 140–160 (LLLIYLSLELVSVISFVLAGF), 175–195 (VIFGGVASGIMLYGMSWIFGI), 222–242 (VFVGTAFMLAGFGYKISAAPF), 254–274 (PTPVTAFLSVGPKAAGFAVLI), 289–309 (GVATPWPVLFGCLAMATMTVG), 323–345 (LAYSSIAHAGYMLLGFSVFSGAG), 356–376 (YCFMNLGAFMVVMAVAEESGG), 394–414 (AAAMAVFLVSLTGLPPTAGFI), 419–439 (LFSALLAAGGAWSWVIAVVGV), and 472–492 (LLGGTACALAIPTVLLGVYWG).

It belongs to the complex I subunit 2 family. NDH-1 is composed of 14 different subunits. Subunits NuoA, H, J, K, L, M, N constitute the membrane sector of the complex.

The protein localises to the cell inner membrane. The enzyme catalyses a quinone + NADH + 5 H(+)(in) = a quinol + NAD(+) + 4 H(+)(out). Functionally, NDH-1 shuttles electrons from NADH, via FMN and iron-sulfur (Fe-S) centers, to quinones in the respiratory chain. The immediate electron acceptor for the enzyme in this species is believed to be ubiquinone. Couples the redox reaction to proton translocation (for every two electrons transferred, four hydrogen ions are translocated across the cytoplasmic membrane), and thus conserves the redox energy in a proton gradient. The polypeptide is NADH-quinone oxidoreductase subunit N 2 (Sorangium cellulosum (strain So ce56) (Polyangium cellulosum (strain So ce56))).